The chain runs to 238 residues: Large ribosomal subunit protein uL2 (238 aa).

A disordered region spans residues 200 to 238; the sequence is HGGGLHQSVSRPSTVSRNAPPGRKVGHIAARRTGRKEGK. Positions 206–216 are enriched in polar residues; the sequence is QSVSRPSTVSR. Positions 223–238 are enriched in basic residues; the sequence is KVGHIAARRTGRKEGK.

Belongs to the universal ribosomal protein uL2 family. In terms of assembly, part of the 50S ribosomal subunit. Forms a bridge to the 30S subunit in the 70S ribosome.

One of the primary rRNA binding proteins. Required for association of the 30S and 50S subunits to form the 70S ribosome, for tRNA binding and peptide bond formation. It has been suggested to have peptidyltransferase activity; this is somewhat controversial. Makes several contacts with the 16S rRNA in the 70S ribosome. This chain is Large ribosomal subunit protein uL2, found in Saccharolobus islandicus (strain L.S.2.15 / Lassen #1) (Sulfolobus islandicus).